The primary structure comprises 492 residues: Protein nucleotidyltransferase YdiU (492 aa).

Residues G88, G90, R91, K111, D123, G124, R174, and R181 each coordinate ATP. The active-site Proton acceptor is the D250. 2 residues coordinate Mg(2+): N251 and D260. D260 is a binding site for ATP.

This sequence belongs to the SELO family. Requires Mg(2+) as cofactor. It depends on Mn(2+) as a cofactor.

It catalyses the reaction L-seryl-[protein] + ATP = 3-O-(5'-adenylyl)-L-seryl-[protein] + diphosphate. The enzyme catalyses L-threonyl-[protein] + ATP = 3-O-(5'-adenylyl)-L-threonyl-[protein] + diphosphate. It carries out the reaction L-tyrosyl-[protein] + ATP = O-(5'-adenylyl)-L-tyrosyl-[protein] + diphosphate. The catalysed reaction is L-histidyl-[protein] + UTP = N(tele)-(5'-uridylyl)-L-histidyl-[protein] + diphosphate. It catalyses the reaction L-seryl-[protein] + UTP = O-(5'-uridylyl)-L-seryl-[protein] + diphosphate. The enzyme catalyses L-tyrosyl-[protein] + UTP = O-(5'-uridylyl)-L-tyrosyl-[protein] + diphosphate. In terms of biological role, nucleotidyltransferase involved in the post-translational modification of proteins. It can catalyze the addition of adenosine monophosphate (AMP) or uridine monophosphate (UMP) to a protein, resulting in modifications known as AMPylation and UMPylation. This is Protein nucleotidyltransferase YdiU from Rhodopseudomonas palustris (strain TIE-1).